The sequence spans 164 residues: UPF0114 protein Avin_40830 (164 aa).

4 helical membrane passes run 15–35 (LLAP…LKFF), 53–73 (LILV…LVMV), 103–125 (GSLK…LRVF), and 136–156 (LLWY…MSYL).

It belongs to the UPF0114 family.

It localises to the cell membrane. The chain is UPF0114 protein Avin_40830 from Azotobacter vinelandii (strain DJ / ATCC BAA-1303).